Reading from the N-terminus, the 170-residue chain is Protein SprT (170 aa).

The SprT-like domain maps to 22–165 (LQLANQHLGT…RQCGEKLQFI (144 aa)). Histidine 78 is a binding site for Zn(2+). Glutamate 79 is a catalytic residue. Position 82 (histidine 82) interacts with Zn(2+).

It belongs to the SprT family. Requires Zn(2+) as cofactor.

Its subcellular location is the cytoplasm. The polypeptide is Protein SprT (Yersinia pseudotuberculosis serotype IB (strain PB1/+)).